The chain runs to 100 residues: Small ribosomal subunit protein bS20 (100 aa).

Basic and acidic residues predominate over residues 1–18; the sequence is MPNKKSAEKRVRQSEQRR. Positions 1–26 are disordered; sequence MPNKKSAEKRVRQSEQRRQKNRGYQK.

This sequence belongs to the bacterial ribosomal protein bS20 family.

Binds directly to 16S ribosomal RNA. This is Small ribosomal subunit protein bS20 from Petrotoga mobilis (strain DSM 10674 / SJ95).